The chain runs to 327 residues: MVKRIGVLTSGGDAPGMNAAIRGVVRSTLFKNKEVFGIYDGYQGLYDNQIQQLNRYSVSDIINRGGTILGSARFPEFTQKENRARAIKNLNSHGIDALVVIGGDGSYAGAELLAKEGGIHCVGLPGTIDNDVAGTDYSIGFFTALQTVVEAIDRLRDTSSSHQRISIVEVMGRHCGDLTLAAAIAGGCEFIVIPEVPFDRKELITEIKAGIAKGKKHAIITITERICDINELSQYIEKETKRETRPTVLGHIQRGGAPVAYDRILASRMGAYAVELLVQTDHKAILSCCVGVQNGKMRHAPISECISIDNKRQKFKEDWLDVANTLF.

Residue G12 coordinates ATP. ADP is bound by residues 22-26 and 55-60; these read RGVVR and RYSVSD. Residues 73 to 74 and 103 to 106 contribute to the ATP site; these read RF and GDGS. D104 contributes to the Mg(2+) binding site. 127–129 lines the substrate pocket; sequence TID. The active-site Proton acceptor is D129. R156 is an ADP binding site. Substrate contacts are provided by residues R164 and 171-173; that span reads MGR. ADP is bound by residues 187–189, K213, and 215–217; these read GCE and KKH. Residues E224, R245, and 251-254 each bind substrate; that span reads HIQR.

The protein belongs to the phosphofructokinase type A (PFKA) family. ATP-dependent PFK group I subfamily. Prokaryotic clade 'B1' sub-subfamily. As to quaternary structure, homotetramer. Mg(2+) is required as a cofactor.

The protein resides in the cytoplasm. It catalyses the reaction beta-D-fructose 6-phosphate + ATP = beta-D-fructose 1,6-bisphosphate + ADP + H(+). Its pathway is carbohydrate degradation; glycolysis; D-glyceraldehyde 3-phosphate and glycerone phosphate from D-glucose: step 3/4. Its activity is regulated as follows. Allosterically activated by ADP and other diphosphonucleosides, and allosterically inhibited by phosphoenolpyruvate. In terms of biological role, catalyzes the phosphorylation of D-fructose 6-phosphate to fructose 1,6-bisphosphate by ATP, the first committing step of glycolysis. This is ATP-dependent 6-phosphofructokinase from Hamiltonella defensa subsp. Acyrthosiphon pisum (strain 5AT).